A 215-amino-acid polypeptide reads, in one-letter code: Histidine biosynthesis bifunctional protein HisIE (215 aa).

A phosphoribosyl-AMP cyclohydrolase region spans residues 1–114 (MLKKHDLLNL…FISNKYNINF (114 aa)). The segment at 115-215 (LFKLEEIIEE…LNTNSEKLLK (101 aa)) is phosphoribosyl-ATP pyrophosphohydrolase.

This sequence in the N-terminal section; belongs to the PRA-CH family. The protein in the C-terminal section; belongs to the PRA-PH family.

It localises to the cytoplasm. The enzyme catalyses 1-(5-phospho-beta-D-ribosyl)-ATP + H2O = 1-(5-phospho-beta-D-ribosyl)-5'-AMP + diphosphate + H(+). It carries out the reaction 1-(5-phospho-beta-D-ribosyl)-5'-AMP + H2O = 1-(5-phospho-beta-D-ribosyl)-5-[(5-phospho-beta-D-ribosylamino)methylideneamino]imidazole-4-carboxamide. Its pathway is amino-acid biosynthesis; L-histidine biosynthesis; L-histidine from 5-phospho-alpha-D-ribose 1-diphosphate: step 2/9. The protein operates within amino-acid biosynthesis; L-histidine biosynthesis; L-histidine from 5-phospho-alpha-D-ribose 1-diphosphate: step 3/9. In Buchnera aphidicola subsp. Acyrthosiphon pisum (strain APS) (Acyrthosiphon pisum symbiotic bacterium), this protein is Histidine biosynthesis bifunctional protein HisIE (hisI).